Consider the following 698-residue polypeptide: Elongation factor G (698 aa).

In terms of domain architecture, tr-type G spans 8-290 (ERYRNIGIAA…AVIEFLPAPN (283 aa)). GTP-binding positions include 17–24 (AHIDAGKT), 88–92 (DTPGH), and 142–145 (NKMD).

Belongs to the TRAFAC class translation factor GTPase superfamily. Classic translation factor GTPase family. EF-G/EF-2 subfamily.

The protein localises to the cytoplasm. Functionally, catalyzes the GTP-dependent ribosomal translocation step during translation elongation. During this step, the ribosome changes from the pre-translocational (PRE) to the post-translocational (POST) state as the newly formed A-site-bound peptidyl-tRNA and P-site-bound deacylated tRNA move to the P and E sites, respectively. Catalyzes the coordinated movement of the two tRNA molecules, the mRNA and conformational changes in the ribosome. This is Elongation factor G from Halorhodospira halophila (strain DSM 244 / SL1) (Ectothiorhodospira halophila (strain DSM 244 / SL1)).